The chain runs to 549 residues: Glucose-6-phosphate isomerase (549 aa).

An N6-acetyllysine mark is found at Lys80, Lys228, and Lys234. Catalysis depends on Glu355, which acts as the Proton donor. Residues His386 and Lys514 contribute to the active site.

Belongs to the GPI family.

It localises to the cytoplasm. It carries out the reaction alpha-D-glucose 6-phosphate = beta-D-fructose 6-phosphate. It participates in carbohydrate biosynthesis; gluconeogenesis. Its pathway is carbohydrate degradation; glycolysis; D-glyceraldehyde 3-phosphate and glycerone phosphate from D-glucose: step 2/4. In terms of biological role, catalyzes the reversible isomerization of glucose-6-phosphate to fructose-6-phosphate. In Escherichia fergusonii (strain ATCC 35469 / DSM 13698 / CCUG 18766 / IAM 14443 / JCM 21226 / LMG 7866 / NBRC 102419 / NCTC 12128 / CDC 0568-73), this protein is Glucose-6-phosphate isomerase.